A 624-amino-acid chain; its full sequence is Ceramide transfer protein (624 aa).

Over residues 1–11 (MSDNQSWNSSG) the composition is skewed to polar residues. The tract at residues 1 to 24 (MSDNQSWNSSGSEEDPETESGPPV) is disordered. Positions 23-117 (PVERCGVLSK…WIDAIEQHKT (95 aa)) constitute a PH domain. At Ser126 the chain carries Phosphoserine. Ser132 carries the post-translational modification Phosphoserine; by PKD. Ser135 carries the phosphoserine modification. The stretch at 263-303 (IELMVKREDSWQKRLDKETEKKRRTEEAYKNAMTELKKKSH) forms a coiled coil. Position 315 is a phosphoserine (Ser315). The FFAT motif lies at 321–327 (EFFDAVE). Tyr372 carries the post-translational modification Phosphotyrosine. Phosphoserine is present on residues Ser373, Ser377, and Ser380. The region spanning 389–618 (DVHRFSSQVE…FTSYVQEKTA (230 aa)) is the START domain. Positions 472, 493, 530, and 579 each coordinate an N-acylsphing-4-enine.

As to quaternary structure, interacts with VAPA and VAPB. Interaction with VAPB is less efficient than with VAPA. Interacts (via FFAT motif) with the MOSPD2 (via MSP domain). Phosphorylation on Ser-132 decreases the affinity toward phosphatidylinositol 4-phosphate at Golgi membranes and reduces ceramide transfer activity. Inactivated by hyperphosphorylation of serine residues by CSNK1G2/CK1 that triggers dissociation from the Golgi complex, thus down-regulating ER-to-Golgi transport of ceramide and sphingomyelin synthesis.

It localises to the cytoplasm. It is found in the golgi apparatus. The protein resides in the endoplasmic reticulum. The catalysed reaction is N-hexadecanoylsphing-4-enine(in) = N-hexadecanoylsphing-4-enine(out). In terms of biological role, shelters ceramides and diacylglycerol lipids inside its START domain and mediates the intracellular trafficking of ceramides and diacylglycerol lipids in a non-vesicular manner. The polypeptide is Ceramide transfer protein (CERT1) (Pongo abelii (Sumatran orangutan)).